We begin with the raw amino-acid sequence, 510 residues long: Putative serine protease K12H4.7 (510 aa).

The first 19 residues, 1-19 (MKTLLAVLLAACVLTQVLS), serve as a signal peptide directing secretion. Residue Ser187 is the Charge relay system of the active site. An N-linked (GlcNAc...) asparagine glycan is attached at Asn234. Asp452 (charge relay system) is an active-site residue. The N-linked (GlcNAc...) asparagine glycan is linked to Asn473. The Charge relay system role is filled by His477.

It belongs to the peptidase S28 family.

The sequence is that of Putative serine protease K12H4.7 from Caenorhabditis elegans.